Consider the following 376-residue polypeptide: Chanoclavine-I aldehyde reductase easA (376 aa).

Residues 29–31 (PTT), A64, Q106, and H173 contribute to the FMN site. Residues H173 and N176 each contribute to the substrate site. Y178 (proton donor) is an active-site residue. Residues K225, G297, 323–324 (GR), and R324 each bind FMN. Y351 provides a ligand contact to substrate.

This sequence belongs to the NADH:flavin oxidoreductase/NADH oxidase family. FMN serves as cofactor.

The enzyme catalyses dihydrochanoclavine-I aldehyde + NADP(+) = chanoclavine-I aldehyde + NADPH + H(+). The protein operates within alkaloid biosynthesis; ergot alkaloid biosynthesis. In terms of biological role, aldehyde reductase; part of the gene cluster that mediates the biosynthesis of fumiclavanine C, a fungal ergot alkaloid. DmaW catalyzes the first step of ergot alkaloid biosynthesis by condensing dimethylallyl diphosphate (DMAP) and tryptophan to form 4-dimethylallyl-L-tryptophan. The second step is catalyzed by the methyltransferase easF that methylates 4-dimethylallyl-L-tryptophan in the presence of S-adenosyl-L-methionine, resulting in the formation of 4-dimethylallyl-L-abrine. The catalase easC and the FAD-dependent oxidoreductase easE then transform 4-dimethylallyl-L-abrine to chanoclavine-I which is further oxidized by EasD in the presence of NAD(+), resulting in the formation of chanoclavine-I aldehyde. EasA reduces chanoclavine-I aldehyde to dihydrochanoclavine-I aldehyde that spontaneously dehydrates to form 6,8-dimethyl-6,7-didehydroergoline. EasG then catalyzes the reduction of 6,8-dimethyl-6,7-didehydroergoline to form festuclavine. Hydrolysis of festuclavine by easM then leads to the formation of fumigaclavine B which is in turn acetylated by easN to fumigaclavine A. Finally, easL catalyzes the conversion of fumigaclavine A into fumigaclavine C by attaching a dimethylallyl moiety to C-2 of the indole nucleus. The chain is Chanoclavine-I aldehyde reductase easA from Aspergillus fumigatus (strain ATCC MYA-4609 / CBS 101355 / FGSC A1100 / Af293) (Neosartorya fumigata).